A 501-amino-acid chain; its full sequence is Solute carrier family 2, facilitated glucose transporter member 5 (501 aa).

Residue Met-1 is modified to N-acetylmethionine. Over 1-18 (MEQQDPIKKEGRLTPVLA) the chain is Cytoplasmic. Residues 19 to 39 (LATLIAAFGSSFQYGYNVAAV) traverse the membrane as a helical segment. Tyr-32 provides a ligand contact to D-fructose. Residues 40 to 68 (NSPAELMKAFYNETHYSRFSEYISEFSLT) are Extracellular-facing. An N-linked (GlcNAc...) asparagine glycan is attached at Asn-51. A helical membrane pass occupies residues 69–91 (LLWSISVSMFPFGGFVGSLMVGP). Over 92–98 (LVNRLGR) the chain is Cytoplasmic. The helical transmembrane segment at 99 to 119 (KGTLLFNNIFSIVPAILMGTS) threads the bilayer. Residues 120-126 (KTARSYE) lie on the Extracellular side of the membrane. The helical transmembrane segment at 127–149 (MIILSRLLVGICAGLSSNVVPMY) threads the bilayer. Residues 150–161 (LGELSPKNLRGA) are Cytoplasmic-facing. A helical transmembrane segment spans residues 162-182 (LGVVPQLFITVGILVAQIVGL). Gln-167 contacts D-fructose. At 183–192 (RSLLATEEGW) the chain is on the extracellular side. Residues 193-213 (PILLGLTAIPAALQLLLLPFF) traverse the membrane as a helical segment. Residues 214 to 277 (PESPRYLLIQ…MFRMRSLRWQ (64 aa)) lie on the Cytoplasmic side of the membrane. A helical transmembrane segment spans residues 278–298 (VISIIILMGGQQLSGVNAIYY). Residues Gln-288 and 296-298 (IYY) each bind D-fructose. Residues 299 to 313 (YADQIYLSAGVKDQD) are Extracellular-facing. A helical transmembrane segment spans residues 314-334 (VQYVTVGTGAVNVLMTICAVF). Residues 335–342 (VVEYLGRR) lie on the Cytoplasmic side of the membrane. The helical transmembrane segment at 343 to 363 (ALLLLGFSVCFIACCVLTVAL) threads the bilayer. At 364–371 (ALQDRVSW) the chain is on the extracellular side. A helical membrane pass occupies residues 372-394 (MPYISIVCVISYVIGHALGPSPI). Position 387 (His-387) interacts with D-fructose. The Cytoplasmic portion of the chain corresponds to 395-412 (PALLITEVFLQSSRSAAY). A helical membrane pass occupies residues 413–433 (MVGGTVHWLSNFAVGLVFPFI). 419-420 (HW) is a D-fructose binding site. Topologically, residues 434 to 439 (QVGLGA) are extracellular. The chain crosses the membrane as a helical span at residues 440 to 460 (YSFIIFAVICLLTTIYIFLIV). Over 461–501 (PETKGKTFVEINHIFTKMNKVSDVHPAKDELKDIPLSAVEL) the chain is Cytoplasmic.

Belongs to the major facilitator superfamily. Sugar transporter (TC 2.A.1.1) family. Glucose transporter subfamily.

It localises to the apical cell membrane. Its subcellular location is the cell membrane. The protein localises to the sarcolemma. It carries out the reaction D-fructose(out) = D-fructose(in). Its function is as follows. Functions as a fructose transporter that has only low activity with other monosaccharides. Can mediate the uptake of deoxyglucose, but with low efficiency. Essential for fructose uptake in the small intestine. Plays a role in the regulation of salt uptake and blood pressure in response to dietary fructose. Required for the development of high blood pressure in response to high dietary fructose intake. In Equus caballus (Horse), this protein is Solute carrier family 2, facilitated glucose transporter member 5.